The following is a 92-amino-acid chain: DNA-directed RNA polymerase subunit Rpo11 (92 aa).

Belongs to the archaeal Rpo11/eukaryotic RPB11/RPC19 RNA polymerase subunit family. Part of the RNA polymerase complex.

The protein resides in the cytoplasm. The enzyme catalyses RNA(n) + a ribonucleoside 5'-triphosphate = RNA(n+1) + diphosphate. In terms of biological role, DNA-dependent RNA polymerase (RNAP) catalyzes the transcription of DNA into RNA using the four ribonucleoside triphosphates as substrates. The protein is DNA-directed RNA polymerase subunit Rpo11 of Methanosarcina mazei (strain ATCC BAA-159 / DSM 3647 / Goe1 / Go1 / JCM 11833 / OCM 88) (Methanosarcina frisia).